The sequence spans 701 residues: Putative pentatricopeptide repeat-containing protein At3g25970 (701 aa).

16 PPR repeats span residues 34–64 (DIYVSNRILDSYIKFGFLGYANMLFDEMPKR), 65–99 (DSVSWNTMISGYTSCGKLEDAWCLFTCMKRSGSDV), 100–134 (DGYSFSRLLKGIASVKRFDLGEQVHGLVIKGGYEC), 135–165 (NVYVGSSLVDMYAKCERVEDAFEAFKEISEP), 166–200 (NSVSWNALIAGFVQVRDIKTAFWLLGLMEMKAAVT), 202–236 (DAGTFAPLLTLLDDPMFCNLLKQVHAKVLKLGLQH), 237–267 (EITICNAMISSYADCGSVSDAKRVFDGLGGS), 269–303 (DLISWNSMIAGFSKHELKESAFELFIQMQRHWVET), 304–338 (DIYTYTGLLSACSGEEHQIFGKSLHGMVIKKGLEQ), 339–371 (VTSATNALISMYIQFPTGTMEDALSLFESLKSK), 372–406 (DLISWNSIITGFAQKGLSEDAVKFFSYLRSSEIKV), 407–441 (DDYAFSALLRSCSDLATLQLGQQIHALATKSGFVS), 442–472 (NEFVISSLIVMYSKCGIIESARKCFQQISSK), 474–508 (STVAWNAMILGYAQHGLGQVSLDLFSQMCNQNVKL), 509–539 (DHVTFTAILTACSHTGLIQEGLELLNLMEPV), and 545–575 (RMEHYAAAVDLLGRAGLVNKAKELIESMPLN). The tract at residues 580–655 (VLKTFLGVCR…VPGWSWIEIR (76 aa)) is type E motif. The tract at residues 656 to 686 (NQVKAFNAEDRSNPLCQDIYMMIKDLTQEMQ) is type E(+) motif.

This sequence belongs to the PPR family. PCMP-E subfamily.

This chain is Putative pentatricopeptide repeat-containing protein At3g25970 (PCMP-E46), found in Arabidopsis thaliana (Mouse-ear cress).